Here is a 557-residue protein sequence, read N- to C-terminus: Prosaposin (557 aa).

The first 16 residues, 1-16 (MYALALFASLLATALT), serve as a signal peptide directing secretion. The propeptide occupies 17–59 (SPVQDPKTCSGGSAVLCRDVKTAVDCGAVKHCQQMVWSKPTAK). One can recognise a Saposin A-type 1 domain in the interval 18–58 (PVQDPKTCSGGSAVLCRDVKTAVDCGAVKHCQQMVWSKPTA). 4 consecutive Saposin B-type domains span residues 59-142 (KSLP…QSLQ), 193-277 (NEDV…NEVK), 313-394 (NVIL…AARP), and 438-519 (NGGF…PSAY). Cystine bridges form between Cys63–Cys138, Cys66–Cys132, and Cys94–Cys106. A glycan (N-linked (GlcNAc...) asparagine) is linked at Asn80. Residues 143–193 (EYLAEQNQKQLESNKIPEVDMARVVAPFMSNIPLLLYPQDHPRSQPQPKAN) constitute a propeptide that is removed on maturation. Intrachain disulfides connect Cys197/Cys273, Cys200/Cys267, and Cys229/Cys240. Asn214 is a glycosylation site (N-linked (GlcNAc...) asparagine). Residues 277–312 (KRVPMKTLVPATETIKNILPALEMMDPYEQNLVQAH) constitute a propeptide that is removed on maturation. 3 disulfide bridges follow: Cys317–Cys390, Cys320–Cys384, and Cys348–Cys359. The N-linked (GlcNAc...) asparagine glycan is linked to Asn334. Residues 393–437 (RPELVEALEQPAPAIVSALLKEPTPPKQPAQPKQSALPAHVPPQK) constitute a propeptide that is removed on maturation. 3 disulfides stabilise this stretch: Cys442–Cys515, Cys445–Cys509, and Cys473–Cys484. Asn459 carries N-linked (GlcNAc...) asparagine glycosylation. A propeptide spanning residues 520–557 (KLLLGTEKCVWGPSYWCQNMETAARCNAVDHCKRHVWN) is cleaved from the precursor. Residues 521–557 (LLLGTEKCVWGPSYWCQNMETAARCNAVDHCKRHVWN) form the Saposin A-type 2 domain.

In terms of assembly, saposin-B is a homodimer. Prosaposin exists as a roughly half-half mixture of monomers and disulfide-linked dimers. Monomeric prosaposin interacts (via C-terminus) with sortilin/SORT1, the interaction is required for targeting to lysosomes. Interacts with GRN; facilitates lysosomal delivery of progranulin from the extracellular space and the biosynthetic pathway.

The protein localises to the secreted. The protein resides in the lysosome. Functionally, behaves as a myelinotrophic and neurotrophic factor, these effects are mediated by its G-protein-coupled receptors, GPR37 and GPR37L1, undergoing ligand-mediated internalization followed by ERK phosphorylation signaling. Saposin-A and saposin-C stimulate the hydrolysis of glucosylceramide by beta-glucosylceramidase (EC 3.2.1.45) and galactosylceramide by beta-galactosylceramidase (EC 3.2.1.46). Saposin-C apparently acts by combining with the enzyme and acidic lipid to form an activated complex, rather than by solubilizing the substrate. In terms of biological role, saposin-B stimulates the hydrolysis of galacto-cerebroside sulfate by arylsulfatase A (EC 3.1.6.8), GM1 gangliosides by beta-galactosidase (EC 3.2.1.23) and globotriaosylceramide by alpha-galactosidase A (EC 3.2.1.22). Saposin-B forms a solubilizing complex with the substrates of the sphingolipid hydrolases. Its function is as follows. Saposin-D is a specific sphingomyelin phosphodiesterase activator (EC 3.1.4.12). Functionally, saposins are specific low-molecular mass non-enzymatic proteins, they participate in the lysosomal degradation of sphingolipids, which takes place by the sequential action of specific hydrolases. The polypeptide is Prosaposin (Psap) (Mus musculus (Mouse)).